The primary structure comprises 473 residues: Ribosomal RNA small subunit methyltransferase F (473 aa).

S-adenosyl-L-methionine contacts are provided by residues 124-130 (ASAPGSK), E148, D175, and D193. The active-site Nucleophile is the C246.

The protein belongs to the class I-like SAM-binding methyltransferase superfamily. RsmB/NOP family.

It localises to the cytoplasm. The enzyme catalyses cytidine(1407) in 16S rRNA + S-adenosyl-L-methionine = 5-methylcytidine(1407) in 16S rRNA + S-adenosyl-L-homocysteine + H(+). Specifically methylates the cytosine at position 1407 (m5C1407) of 16S rRNA. The sequence is that of Ribosomal RNA small subunit methyltransferase F from Aliivibrio fischeri (strain MJ11) (Vibrio fischeri).